The following is a 107-amino-acid chain: MVNFNQFLKQAQTMQKKMQEAQEQMANTRYTGKAGGGLVEIIATGKGEVEKVSIDASLLKEEEKEMLEDLIKVAFNDAKQKCDADSQNSMSGALSGMSLPPGFKMPF.

This sequence belongs to the YbaB/EbfC family. In terms of assembly, homodimer.

It is found in the cytoplasm. It localises to the nucleoid. Binds to DNA and alters its conformation. May be involved in regulation of gene expression, nucleoid organization and DNA protection. This chain is Nucleoid-associated protein RBE_0048, found in Rickettsia bellii (strain RML369-C).